We begin with the raw amino-acid sequence, 440 residues long: Chromosome partition protein MukF (440 aa).

Positions 208–236 (LSETSGTLRELQDTLDAAGDKLQANLLRI) are leucine-zipper.

It belongs to the MukF family. In terms of assembly, interacts, and probably forms a ternary complex, with MukE and MukB via its C-terminal region. The complex formation is stimulated by calcium or magnesium. It is required for an interaction between MukE and MukB.

The protein resides in the cytoplasm. The protein localises to the nucleoid. In terms of biological role, involved in chromosome condensation, segregation and cell cycle progression. May participate in facilitating chromosome segregation by condensation DNA from both sides of a centrally located replisome during cell division. Not required for mini-F plasmid partitioning. Probably acts via its interaction with MukB and MukE. Overexpression results in anucleate cells. It has a calcium binding activity. This Klebsiella pneumoniae subsp. pneumoniae (strain ATCC 700721 / MGH 78578) protein is Chromosome partition protein MukF.